Here is a 118-residue protein sequence, read N- to C-terminus: Succinate dehydrogenase assembly factor 1, mitochondrial (118 aa).

Residues 14-16 (LYR) carry the LYR motif 1; required for interaction with HSC20 motif. An LYR motif 2; not required for interaction with HSC20 motif is present at residues 53–55 (LYR). The tract at residues 53–65 (LYRRGRRQLQMLR) is interaction with SDHB. The interval 72–118 (MGAFVRTRGPTEESNGAGAPGTLSGEGDDPRKPLDSMRTPKTPLDGR) is disordered.

It belongs to the complex I LYR family. SDHAF1 subfamily. Interacts with SDHB within an SDHA-SDHB subcomplex. Also interacts with the iron-sulfur transfer complex formed by HSC20, HSPA9 and ISCU through direct binding to HSC20. Binding of SDHAF1 to SDHB precedes and is necessary for recruitment of the iron-sulfur transfer complex by SDHAF1.

The protein resides in the mitochondrion matrix. Plays an essential role in the assembly of succinate dehydrogenase (SDH), an enzyme complex (also referred to as respiratory complex II) that is a component of both the tricarboxylic acid (TCA) cycle and the mitochondrial electron transport chain, and which couples the oxidation of succinate to fumarate with the reduction of ubiquinone (coenzyme Q) to ubiquinol. Promotes maturation of the iron-sulfur protein subunit SDHB of the SDH catalytic dimer, protecting it from the deleterious effects of oxidants. May act together with SDHAF3. Contributes to iron-sulfur cluster incorporation into SDHB by binding to SDHB and recruiting the iron-sulfur transfer complex formed by HSC20, HSPA9 and ISCU through direct binding to HSC20. In Bos taurus (Bovine), this protein is Succinate dehydrogenase assembly factor 1, mitochondrial.